Here is a 228-residue protein sequence, read N- to C-terminus: Small ribosomal subunit protein uS7A (228 aa).

This sequence belongs to the universal ribosomal protein uS7 family.

This chain is Small ribosomal subunit protein uS7A (RpS5a), found in Drosophila melanogaster (Fruit fly).